An 83-amino-acid polypeptide reads, in one-letter code: Retinal cone rhodopsin-sensitive cGMP 3',5'-cyclic phosphodiesterase subunit gamma (83 aa).

Residues M1–T17 are compositionally biased toward polar residues. A disordered region spans residues M1–P51. Residues G22–V43 are compositionally biased toward basic residues.

The protein belongs to the rod/cone cGMP-PDE gamma subunit family. In terms of assembly, tetramer composed of two catalytic chains (alpha and beta), and two inhibitory chains (gamma).

The catalysed reaction is 3',5'-cyclic GMP + H2O = GMP + H(+). In terms of biological role, participates in processes of transmission and amplification of the visual signal. cGMP-PDEs are the effector molecules in G-protein-mediated phototransduction in vertebrate rods and cones. In Bos taurus (Bovine), this protein is Retinal cone rhodopsin-sensitive cGMP 3',5'-cyclic phosphodiesterase subunit gamma (PDE6H).